Here is a 758-residue protein sequence, read N- to C-terminus: Long-chain-alcohol oxidase FAO1 (758 aa).

The next 2 helical transmembrane spans lie at 102 to 122 (IVLR…LVCL) and 155 to 175 (PLAR…YFTW). 246–261 (CDAVVVGSGCGGGVAA) is an FAD binding site. The active-site Proton acceptor is His-689.

Belongs to the GMC oxidoreductase family.

The protein resides in the membrane. The enzyme catalyses a long-chain primary fatty alcohol + O2 = a long-chain fatty aldehyde + H2O2. Functionally, long-chain fatty alcohol oxidase involved in the omega-oxidation pathway of lipid degradation. The protein is Long-chain-alcohol oxidase FAO1 (FAO1) of Arabidopsis thaliana (Mouse-ear cress).